A 147-amino-acid chain; its full sequence is MELSVAMYGLLCLLFSQAVPMCVPTDYTLYEERRECDFCVAINTTICMGFCYSRDSNMKELAGPRFLIQRGCTYDQVEYRTVILPGCPLHANPLFTYPVALSCHCGTCNTDSDECAHKASSGDGARCSKPLRHIYPYPGLNSYIHPN.

Positions M1–P20 are cleaved as a signal peptide. 6 disulfides stabilise this stretch: C22-C72, C36-C87, C39-C127, C47-C103, C51-C105, and C108-C115. N-linked (GlcNAc...) asparagine glycosylation is present at N43.

Belongs to the glycoprotein hormones subunit beta family. In terms of assembly, heterodimer of a common alpha chain and a unique beta chain which confers biological specificity to thyrotropin, lutropin, follitropin and gonadotropin. In terms of tissue distribution, pituitary gland. Higher levels seen in immature fishes than the mature fishes.

The protein localises to the secreted. In terms of biological role, indispensable for the control of thyroid structure and metabolism. May play some role in the biological processes of the immature fishes. This chain is Thyrotropin subunit beta (tshb), found in Oncorhynchus mykiss (Rainbow trout).